Here is a 115-residue protein sequence, read N- to C-terminus: MNIINKIEQEQLKADVTPFNVGDTIKVHTRVIEGGKERIQIFQGIVIAKRGSGINEAFTVRKISYGEGVERVFPLHTPRIAKIEVVNRGKVRRAKLHYLRGRIGKDAMIVKSANR.

Belongs to the bacterial ribosomal protein bL19 family.

Its function is as follows. This protein is located at the 30S-50S ribosomal subunit interface and may play a role in the structure and function of the aminoacyl-tRNA binding site. The sequence is that of Large ribosomal subunit protein bL19 from Akkermansia muciniphila (strain ATCC BAA-835 / DSM 22959 / JCM 33894 / BCRC 81048 / CCUG 64013 / CIP 107961 / Muc).